Consider the following 264-residue polypeptide: uncharacterized protein (264 aa).

15–22 contacts ATP; the sequence is KGGTGKTT.

This sequence belongs to the ParA family. MinD subfamily.

This is an uncharacterized protein from Methanocaldococcus jannaschii (strain ATCC 43067 / DSM 2661 / JAL-1 / JCM 10045 / NBRC 100440) (Methanococcus jannaschii).